We begin with the raw amino-acid sequence, 162 residues long: Protein-export protein SecB (162 aa).

It belongs to the SecB family. Homotetramer, a dimer of dimers. One homotetramer interacts with 1 SecA dimer.

The protein resides in the cytoplasm. Its function is as follows. One of the proteins required for the normal export of preproteins out of the cell cytoplasm. It is a molecular chaperone that binds to a subset of precursor proteins, maintaining them in a translocation-competent state. It also specifically binds to its receptor SecA. The protein is Protein-export protein SecB of Pseudomonas syringae pv. syringae (strain B728a).